A 437-amino-acid polypeptide reads, in one-letter code: Phosphomethylpyrimidine synthase (437 aa).

Substrate-binding positions include N69, M98, Y127, H163, S185 to G187, D226 to R229, and E265. A Zn(2+)-binding site is contributed by H269. Y292 contacts substrate. Residue H333 participates in Zn(2+) binding. Residues C409, C412, and C416 each contribute to the [4Fe-4S] cluster site.

This sequence belongs to the ThiC family. [4Fe-4S] cluster is required as a cofactor.

It carries out the reaction 5-amino-1-(5-phospho-beta-D-ribosyl)imidazole + S-adenosyl-L-methionine = 4-amino-2-methyl-5-(phosphooxymethyl)pyrimidine + CO + 5'-deoxyadenosine + formate + L-methionine + 3 H(+). Its pathway is cofactor biosynthesis; thiamine diphosphate biosynthesis. Catalyzes the synthesis of the hydroxymethylpyrimidine phosphate (HMP-P) moiety of thiamine from aminoimidazole ribotide (AIR) in a radical S-adenosyl-L-methionine (SAM)-dependent reaction. This is Phosphomethylpyrimidine synthase from Clostridium botulinum (strain Langeland / NCTC 10281 / Type F).